A 183-amino-acid polypeptide reads, in one-letter code: MSSGSIHVITGPMFSGKTSELVRRIKRFMLSNFKCIIIKHCGDNRYNEDDINKVYTHDLLFMEATASSNLSVLVPTLLNDGVQVIGIDEAQFFLDIVEFSESMANLGKTVIVAALNGDFKRELFGNVYKLLSLAETVSSLTAICVKCYCDASFSKRVTENKEVMDIGGKDKYIAVCRKCFFSN.

Gly-11–Thr-18 provides a ligand contact to ATP. Glu-89 acts as the Proton acceptor in catalysis. Phe-119 contributes to the substrate binding site. Zn(2+)-binding residues include Cys-144 and Cys-147. Residue Val-163–Gly-167 participates in substrate binding. Zn(2+)-binding residues include Cys-176 and Cys-179.

It belongs to the thymidine kinase family.

It carries out the reaction thymidine + ATP = dTMP + ADP + H(+). In Vertebrata (FPV), this protein is Thymidine kinase (TK).